The following is a 280-amino-acid chain: MSHNDTIPLYQSSQSDIDEIENMMNDSFQSGPGTVLPARPPSPIRPSIPVSSSPFVQSNLPPLPPSSSSSTQKVMPVPAPPPLPSAGNEGNKSIGGSGFGSPPNTLTEPVWDTVKRDLSRIVSNLKLVVFPNPYREDPGKALRDWDLWGPFFFIVFLGLTLSWSASVKKSEVFAVAFALLAAGAVILTLNVLLLGGHIIFFQSLSLLGYCLFPLDVGAVICMLKDNVILKMVVVSVTLAWSSWAAYPFMSAAVNPRRKALALYPVFLMYVSVGFLIIAIN.

Polar residues predominate over residues 1 to 15 (MSHNDTIPLYQSSQS). The segment at 1-106 (MSHNDTIPLY…SGFGSPPNTL (106 aa)) is disordered. Over 1 to 146 (MSHNDTIPLY…DPGKALRDWD (146 aa)) the chain is Cytoplasmic. The chain crosses the membrane as a helical span at residues 147–167 (LWGPFFFIVFLGLTLSWSASV). Over 168 to 171 (KKSE) the chain is Lumenal. 2 helical membrane passes run 172–192 (VFAVAFALLAAGAVILTLNVL) and 193–213 (LLGGHIIFFQSLSLLGYCLFP). The Lumenal portion of the chain corresponds to 214-230 (LDVGAVICMLKDNVILK). Residues 231 to 251 (MVVVSVTLAWSSWAAYPFMSA) traverse the membrane as a helical segment. The Cytoplasmic portion of the chain corresponds to 252-258 (AVNPRRK). A helical transmembrane segment spans residues 259–279 (ALALYPVFLMYVSVGFLIIAI). Residue Asn-280 is a topological domain, lumenal.

This sequence belongs to the YIP1 family. Homodimer and heterodimer with YIP4A. Component of a trans-Golgi network (TGN)-localized ECH/YIP4 complex made of ECH, YIP4A and YIP4B. Interacts directly with ECH. As to expression, expressed in developing root hair cells.

It is found in the golgi apparatus. The protein localises to the trans-Golgi network membrane. Together with YIP4A, involved in the regulation of cell elongation during root and hypocotyl growth. YIP4A and YIP4B are central trafficking components in Rho-of-plant (ROPs, e.g. ARAC4/ROP2, ARAC5/ROP4 and ARAC3/ROP6) small GTPases-dependent root hair formation, thus contributing to activation and plasma membrane accumulation of ROPs during hair initiation. The ECH/YIP4 complex is involved in the modulation of the trans-Golgi network (TGN)-mediated trafficking of some proteins and cell wall components (e.g. pectin and hemicellulose) to the cell wall in dark-grown hypocotyls and in secretory cells of the seed coat. This is Protein YIP4b from Arabidopsis thaliana (Mouse-ear cress).